A 1705-amino-acid polypeptide reads, in one-letter code: ALK tyrosine kinase receptor (1705 aa).

Positions Met1–Cys21 are cleaved as a signal peptide. At Ala22–Ser1035 the chain is on the extracellular side. N-linked (GlcNAc...) asparagine glycans are attached at residues Asn40 and Asn48. A heparin-binding region region spans residues Arg54–Leu76. N-linked (GlcNAc...) asparagine glycans are attached at residues Asn124, Asn259, Asn334, Asn434, Asn442, Asn458, Asn484, Asn578, Asn590, and Asn635. Residues Ser486 to Leu644 form the MAM domain. A disulfide bond links Cys694 and Cys707. Asn717 carries N-linked (GlcNAc...) asparagine glycosylation. Cysteines 788 and 799 form a disulfide. N-linked (GlcNAc...) asparagine glycosylation is found at Asn808 and Asn881. The disordered stretch occupies residues Gly842–Pro892. A disulfide bridge links Cys903 with Cys921. Residue Asn979 is glycosylated (N-linked (GlcNAc...) asparagine). Cystine bridges form between Cys980-Cys988 and Cys983-Cys997. The EGF-like stretch occupies residues Cys980 to Thr1016. The N-linked (GlcNAc...) asparagine glycan is linked to Asn1014. A helical membrane pass occupies residues Val1036 to Tyr1056. Residues Arg1057–Leu1705 lie on the Cytoplasmic side of the membrane. A Protein kinase domain is found at Ile1113–Val1389. ATP is bound by residues Leu1119 to Val1127 and Lys1147. Asp1246 (proton acceptor) is an active-site residue. 5 disordered regions span residues Pro1395–Asn1499, Ala1505–Thr1524, Gln1532–Gln1557, Gln1588–Thr1613, and Gly1646–Pro1681. Positions Lys1484 to Gln1493 are enriched in polar residues. Low complexity-rich tracts occupy residues Gln1532–Gln1544 and Gln1588–Pro1602. Residues Leu1603 to Thr1613 are compositionally biased toward pro residues.

Belongs to the protein kinase superfamily. Tyr protein kinase family. Insulin receptor subfamily. In terms of assembly, homodimer; homodimerizes upon binding to alkal ligands (alkal1, alkal2a or alkal2b). In terms of tissue distribution, highly expressed in the developing central nervous system: highly expressed in brain, with much lower expression in heart, caudal fin and testis.

The protein resides in the cell membrane. It catalyses the reaction L-tyrosyl-[protein] + ATP = O-phospho-L-tyrosyl-[protein] + ADP + H(+). With respect to regulation, inhibited by ALK inhibitor TAE684. Functionally, receptor tyrosine kinase required for neurogenesis in the developing central nervous system. Following activation by alkal ligands (alkal1, alkal2a or alkal2b) at the cell surface, transduces an extracellular signal into an intracellular response. Ligand-binding to the extracellular domain induces tyrosine kinase activation, resulting in the activation of the mitogen-activated protein kinase (MAPK) pathway. Phosphorylates almost exclusively at the first tyrosine of the Y-x-x-x-Y-Y motif. This Danio rerio (Zebrafish) protein is ALK tyrosine kinase receptor.